A 487-amino-acid chain; its full sequence is Argininosuccinate lyase (487 aa).

Belongs to the lyase 1 family. Argininosuccinate lyase subfamily.

It is found in the cytoplasm. It carries out the reaction 2-(N(omega)-L-arginino)succinate = fumarate + L-arginine. Its pathway is amino-acid biosynthesis; L-arginine biosynthesis; L-arginine from L-ornithine and carbamoyl phosphate: step 3/3. The chain is Argininosuccinate lyase from Methanothrix thermoacetophila (strain DSM 6194 / JCM 14653 / NBRC 101360 / PT) (Methanosaeta thermophila).